Reading from the N-terminus, the 437-residue chain is 3-phosphoshikimate 1-carboxyvinyltransferase (437 aa).

3 residues coordinate 3-phosphoshikimate: Lys-28, Ser-29, and Arg-33. Lys-28 contacts phosphoenolpyruvate. 2 residues coordinate phosphoenolpyruvate: Gly-97 and Arg-125. Residues Ser-168, Ser-169, Gln-170, Glu-316, and His-343 each contribute to the 3-phosphoshikimate site. Residue Gln-170 participates in phosphoenolpyruvate binding. Glu-316 serves as the catalytic Proton acceptor. Residues Arg-347, Arg-388, and Lys-413 each coordinate phosphoenolpyruvate.

The protein belongs to the EPSP synthase family. As to quaternary structure, monomer.

It is found in the cytoplasm. The enzyme catalyses 3-phosphoshikimate + phosphoenolpyruvate = 5-O-(1-carboxyvinyl)-3-phosphoshikimate + phosphate. It functions in the pathway metabolic intermediate biosynthesis; chorismate biosynthesis; chorismate from D-erythrose 4-phosphate and phosphoenolpyruvate: step 6/7. In terms of biological role, catalyzes the transfer of the enolpyruvyl moiety of phosphoenolpyruvate (PEP) to the 5-hydroxyl of shikimate-3-phosphate (S3P) to produce enolpyruvyl shikimate-3-phosphate and inorganic phosphate. This chain is 3-phosphoshikimate 1-carboxyvinyltransferase, found in Rhodococcus erythropolis (strain PR4 / NBRC 100887).